Consider the following 396-residue polypeptide: Acetate kinase (396 aa).

Position 8 (Asn-8) interacts with Mg(2+). Lys-15 lines the ATP pocket. Arg-89 contacts substrate. The active-site Proton donor/acceptor is Asp-146. ATP-binding positions include 206-210 (HLGNG), 281-283 (DLR), and 329-333 (GIGEN). A Mg(2+)-binding site is contributed by Glu-382.

It belongs to the acetokinase family. In terms of assembly, homodimer. Mg(2+) is required as a cofactor. The cofactor is Mn(2+).

It is found in the cytoplasm. The catalysed reaction is acetate + ATP = acetyl phosphate + ADP. Its pathway is metabolic intermediate biosynthesis; acetyl-CoA biosynthesis; acetyl-CoA from acetate: step 1/2. Catalyzes the formation of acetyl phosphate from acetate and ATP. Can also catalyze the reverse reaction. The protein is Acetate kinase of Geobacillus kaustophilus (strain HTA426).